The sequence spans 267 residues: 3-methyl-2-oxobutanoate hydroxymethyltransferase (267 aa).

Residues Asp45 and Asp84 each coordinate Mg(2+). Residues 45 to 46 (DS), Asp84, and Lys113 each bind 3-methyl-2-oxobutanoate. A Mg(2+)-binding site is contributed by Glu115. Glu182 serves as the catalytic Proton acceptor.

It belongs to the PanB family. Homodecamer; pentamer of dimers. Mg(2+) is required as a cofactor.

It localises to the cytoplasm. It carries out the reaction 3-methyl-2-oxobutanoate + (6R)-5,10-methylene-5,6,7,8-tetrahydrofolate + H2O = 2-dehydropantoate + (6S)-5,6,7,8-tetrahydrofolate. Its pathway is cofactor biosynthesis; coenzyme A biosynthesis. In terms of biological role, catalyzes the reversible reaction in which hydroxymethyl group from 5,10-methylenetetrahydrofolate is transferred onto alpha-ketoisovalerate to form ketopantoate. In Saccharolobus islandicus (strain Y.N.15.51 / Yellowstone #2) (Sulfolobus islandicus), this protein is 3-methyl-2-oxobutanoate hydroxymethyltransferase.